Here is a 231-residue protein sequence, read N- to C-terminus: Flagellar L-ring protein (231 aa).

The first 18 residues, 1–18 (MNRLLSVFALGGAVLLAG), serve as a signal peptide directing secretion. A lipid anchor (N-palmitoyl cysteine) is attached at C19. Residue C19 is the site of S-diacylglycerol cysteine attachment.

Belongs to the FlgH family. The basal body constitutes a major portion of the flagellar organelle and consists of four rings (L,P,S, and M) mounted on a central rod.

Its subcellular location is the cell outer membrane. It is found in the bacterial flagellum basal body. Assembles around the rod to form the L-ring and probably protects the motor/basal body from shearing forces during rotation. The sequence is that of Flagellar L-ring protein from Pseudomonas putida (strain GB-1).